The primary structure comprises 493 residues: Acetylcholine receptor subunit epsilon (493 aa).

The signal sequence occupies residues 1–20 (MARAPLGVLLLLGLLGRGVG). At 21–239 (KNEELRLYHH…VIYSLIIRRK (219 aa)) the chain is on the extracellular side. N-linked (GlcNAc...) asparagine glycans are attached at residues N86 and N161. Cysteines 148 and 162 form a disulfide. The chain crosses the membrane as a helical span at residues 240 to 264 (PLFYVINIIVPCVLISGLVLLAYFL). At 265–272 (PAQAGGQK) the chain is on the cytoplasmic side. The chain crosses the membrane as a helical span at residues 273-291 (CTVSINVLLAQTVFLFLIA). The Extracellular segment spans residues 292 to 306 (QKIPETSLSVPLLGR). Residues 307-328 (FLIFVMVVATLIVMNCVIVLNV) form a helical membrane-spanning segment. Over 329 to 456 (SQRTPTTHAM…WVRMGNALDN (128 aa)) the chain is Cytoplasmic. Residues 457–480 (ICFWAALVLFSVGSSLIFLGAYFN) traverse the membrane as a helical segment. Residues 481–493 (RVPDLPYAPCIQP) lie on the Extracellular side of the membrane.

This sequence belongs to the ligand-gated ion channel (TC 1.A.9) family. Acetylcholine receptor (TC 1.A.9.1) subfamily. Epsilon/CHRNE sub-subfamily. In terms of assembly, pentamer of two alpha chains, and one each of the beta, delta, and gamma (in immature muscle) or epsilon (in mature muscle) chains. The muscle heteropentamer composed of alpha-1, beta-1, delta, epsilon subunits interacts with the alpha-conotoxin ImII.

Its subcellular location is the postsynaptic cell membrane. It is found in the cell membrane. The enzyme catalyses K(+)(in) = K(+)(out). It carries out the reaction Na(+)(in) = Na(+)(out). After binding acetylcholine, the AChR responds by an extensive change in conformation that affects all subunits and leads to opening of an ion-conducting channel across the plasma membrane. The sequence is that of Acetylcholine receptor subunit epsilon from Homo sapiens (Human).